The sequence spans 357 residues: tRNA-specific 2-thiouridylase MnmA (357 aa).

ATP-binding positions include 7 to 14 (GMSGGVDS) and Met33. Catalysis depends on Cys103, which acts as the Nucleophile. An intrachain disulfide couples Cys103 to Cys200. Gly127 contacts ATP. Residues 150 to 152 (KDQ) form an interaction with tRNA region. The active-site Cysteine persulfide intermediate is Cys200. Residues 306–307 (RY) are interaction with tRNA.

The protein belongs to the MnmA/TRMU family.

Its subcellular location is the cytoplasm. It catalyses the reaction S-sulfanyl-L-cysteinyl-[protein] + uridine(34) in tRNA + AH2 + ATP = 2-thiouridine(34) in tRNA + L-cysteinyl-[protein] + A + AMP + diphosphate + H(+). Functionally, catalyzes the 2-thiolation of uridine at the wobble position (U34) of tRNA, leading to the formation of s(2)U34. The protein is tRNA-specific 2-thiouridylase MnmA of Lachnoclostridium phytofermentans (strain ATCC 700394 / DSM 18823 / ISDg) (Clostridium phytofermentans).